The primary structure comprises 732 residues: Small conductance calcium-activated potassium channel protein 3 (732 aa).

Residues 1–11 (MDTSGHFHDSG) show a composition bias toward basic and acidic residues. Disordered regions lie at residues 1 to 82 (MDTS…QQAP) and 119 to 161 (AILH…QASP). Residues 35–61 (QPPPPPAPPAVPQQPPGPLLQPQPPQP) are compositionally biased toward pro residues. Over residues 62–82 (QQQQSQQQQQQQSQQQQQQAP) the composition is skewed to low complexity. Residues 119 to 133 (AILHPSSRQGSQLNL) are compositionally biased toward polar residues. Residues 139-148 (GHSPSSTATS) show a composition bias toward low complexity. Serine 168 is modified (phosphoserine). The segment covering 241–257 (THNHQHAGTTAGSTTFP) has biased composition (polar residues). The segment at 241 to 260 (THNHQHAGTTAGSTTFPKAN) is disordered. A helical transmembrane segment spans residues 289 to 309 (LIFGMFGIVVMVIETELSWGL). The chain crosses the membrane as a helical span at residues 316–336 (FSLALKCLISLSTVILLGLII). The helical transmembrane segment at 367–387 (ISLEMLVCAIHPIPGEYKFFW) threads the bilayer. Residues 406 to 426 (IILSIPMFLRLYLIARVMLLH) form a helical membrane-spanning segment. Residues 455-475 (LMTICPGTVLLVFSISLWIIA) form a helical membrane-spanning segment. The pore-forming intramembrane region spans 495-515 (FLGAMWLISITFLSIGYGDMV). Residues 524–544 (VCLLTGIMGAGCTALVVAVVA) form a helical membrane-spanning segment. The interval 562 to 638 (DTQLTKRIKN…LVDLSKMQNV (77 aa)) is calmodulin-binding. A coiled-coil region spans residues 643 to 670 (ITELNDRSEDLEKQIGSLESKLEHLTAS). Residues 704–732 (GTSHAPPSDSPIGISSTSFPTPYTSSSSC) are disordered. Over residues 718–732 (SSTSFPTPYTSSSSC) the composition is skewed to low complexity.

Belongs to the potassium channel KCNN family. KCa2.3/KCNN3 subfamily. In terms of assembly, homodimer. Heteromultimer with KCNN2 or KCNN1; this modulates plasma membrane expression and consequently the small conductance calcium-activated potassium channel activity. The complex is composed of 4 channel subunits each of which binds to a calmodulin subunit which regulates the channel activity through calcium-binding. Interacts with CALM1. In terms of tissue distribution, expressed at low levels in atrial and ventricular myocytes (at protein level).

It is found in the cell membrane. Its subcellular location is the cytoplasm. The protein localises to the myofibril. It localises to the sarcomere. The protein resides in the z line. The enzyme catalyses K(+)(in) = K(+)(out). With respect to regulation, inhibited by bee venom neurotoxin apamin. Its function is as follows. Small conductance calcium-activated potassium channel that mediates the voltage-independent transmembrane transfer of potassium across the cell membrane through a constitutive interaction with calmodulin which binds the intracellular calcium allowing its opening. The current is characterized by a voltage-independent activation, an intracellular calcium concentration increase-dependent activation and a single-channel conductance of 10 picosiemens. Also presents an inwardly rectifying current, thus reducing its already small outward conductance of potassium ions, which is particularly the case when the membrane potential displays positive values, above + 20 mV. Activation is followed by membrane hyperpolarization. Thought to regulate neuronal excitability by contributing to the slow component of synaptic afterhyperpolarization. This is Small conductance calcium-activated potassium channel protein 3 from Mus musculus (Mouse).